We begin with the raw amino-acid sequence, 427 residues long: Flavohemoprotein (427 aa).

A Globin domain is found at 30–168 (ELNESQKQYI…LAKILIDSEK (139 aa)). His-114 is a binding site for heme b. Active-site charge relay system residues include Tyr-124 and Glu-167. A reductase region spans residues 176-427 (WNGFVEFKVT…QSEFFGPYIP (252 aa)). In terms of domain architecture, FAD-binding FR-type spans 177-285 (NGFVEFKVTE…SPPAGNFVYK (109 aa)). FAD is bound by residues Tyr-216 and 232–235 (REYS). NADP(+) is bound at residue 301 to 306 (GIGITP). 421–424 (FFGP) is an FAD binding site.

Belongs to the globin family. Two-domain flavohemoproteins subfamily. It in the C-terminal section; belongs to the flavoprotein pyridine nucleotide cytochrome reductase family. Requires FAD as cofactor. It depends on heme b as a cofactor.

The protein resides in the cytoplasm. Its subcellular location is the nucleus. The enzyme catalyses 2 nitric oxide + NADPH + 2 O2 = 2 nitrate + NADP(+) + H(+). It carries out the reaction 2 nitric oxide + NADH + 2 O2 = 2 nitrate + NAD(+) + H(+). Its function is as follows. Is involved in NO detoxification in an aerobic process, termed nitric oxide dioxygenase (NOD) reaction that utilizes O(2) and NAD(P)H to convert NO to nitrate, which protects the fungus from various noxious nitrogen compounds. Therefore, plays a central role in the inducible response to nitrosative stress. Functionally, in the presence of oxygen and NADH, it has NADH oxidase activity, which leads to the generation of superoxide and H(2)O(2). Under anaerobic conditions, it also exhibits nitric oxide reductase and FAD reductase activities. However, all these reactions are much lower than NOD activity. This Schizosaccharomyces pombe (strain 972 / ATCC 24843) (Fission yeast) protein is Flavohemoprotein.